The chain runs to 366 residues: NADH-quinone oxidoreductase subunit D (366 aa).

Belongs to the complex I 49 kDa subunit family. As to quaternary structure, NDH-1 is composed of 14 different subunits. Subunits NuoB, C, D, E, F, and G constitute the peripheral sector of the complex.

Its subcellular location is the cell membrane. It catalyses the reaction a quinone + NADH + 5 H(+)(in) = a quinol + NAD(+) + 4 H(+)(out). Its function is as follows. NDH-1 shuttles electrons from NADH, via FMN and iron-sulfur (Fe-S) centers, to quinones in the respiratory chain. The immediate electron acceptor for the enzyme in this species is believed to be a menaquinone. Couples the redox reaction to proton translocation (for every two electrons transferred, four hydrogen ions are translocated across the cytoplasmic membrane), and thus conserves the redox energy in a proton gradient. The polypeptide is NADH-quinone oxidoreductase subunit D (Bacillus thuringiensis (strain Al Hakam)).